The primary structure comprises 427 residues: Gamma-glutamyl phosphate reductase (427 aa).

Belongs to the gamma-glutamyl phosphate reductase family.

It localises to the cytoplasm. It catalyses the reaction L-glutamate 5-semialdehyde + phosphate + NADP(+) = L-glutamyl 5-phosphate + NADPH + H(+). It functions in the pathway amino-acid biosynthesis; L-proline biosynthesis; L-glutamate 5-semialdehyde from L-glutamate: step 2/2. Its function is as follows. Catalyzes the NADPH-dependent reduction of L-glutamate 5-phosphate into L-glutamate 5-semialdehyde and phosphate. The product spontaneously undergoes cyclization to form 1-pyrroline-5-carboxylate. This is Gamma-glutamyl phosphate reductase from Bifidobacterium adolescentis (strain ATCC 15703 / DSM 20083 / NCTC 11814 / E194a).